Here is a 265-residue protein sequence, read N- to C-terminus: MMTTKPTFAVTLVTLFPEMAQAITGFGVTRRAVDNGQLQVETVNPRDFTEDRHRTVDDRPFGGGPGMVMKVEPLAKALQAARVANPAAKVIYLSPQGQPLTQAKATALAEQPGLILLAGRYEGVDERLLDAEVDEQISIGDYVLSGGELPALVLIDAVSRLIPGVLGHQDSAEQDSFSGEFENLLDCPHYTRPEVYGEQAVPPVLLSGNHELIRRWRLKQALGRTWQQRPDLLEARRARGLSKEEQQLLDEYIAEQPSHTAKTTD.

S-adenosyl-L-methionine-binding positions include G119 and I139–L144.

It belongs to the RNA methyltransferase TrmD family. As to quaternary structure, homodimer.

The protein resides in the cytoplasm. It carries out the reaction guanosine(37) in tRNA + S-adenosyl-L-methionine = N(1)-methylguanosine(37) in tRNA + S-adenosyl-L-homocysteine + H(+). Its function is as follows. Specifically methylates guanosine-37 in various tRNAs. The chain is tRNA (guanine-N(1)-)-methyltransferase from Alcanivorax borkumensis (strain ATCC 700651 / DSM 11573 / NCIMB 13689 / SK2).